The primary structure comprises 825 residues: MAPLACDPTALDHAGATVVAAGESLGSVISTLTAALAGTSGMAGDDPVGAALGRRYDGAAAKLIQAMADTRNGLCSIGDGVRMSAHNYAVAEAMSDLAGRASALPAPQVTGPLTVGAPPSAVGHGSGAPAGWGWVAPSIGMIWPTGDSAKLRAAAAAWATAGANFMAAETAAGGGTMAAIGAQQIPEGAAINKALADASSATADVARQCQTIAAQLNSYAAKVDQVHAAILDLLSRICDPLTGIKEVWDLLTDEDEDEIKKIADDIRTVVDNFGREADTLGGQIEATVSAVAAATENMSHWAGKEWDHFLHGTPVGRALNQVGQAFKGVGEEGWGFLKGLYEVSPNRMLLDPVGYGKTMAGMVEGAGTLVGLGPDGVPGAFDAWKALGKDVTHWDEWGSNPAEALGKSTFDVATLALPGGPLSKLGKFGHSAADALKGLKKPPGVPKPPEVKPPAAPKAPDSGQPAPSGKPGPVAPSGKPAPGPADGPLPHSPTESKPPAGGTPPAAEPPKPTAAPHSGEPKPIATPPESVGKPVTPAPAEGAPAQPHEPVSARVPPTVPAADTPAPSAPAASMSAASGPPMPPTPSLPEPASLPSGPSGDLPAETPPTAGIPHSGEPSAPSSVPPHFPDTPTHGLGDGGAHGPPESDPKNANGHGPHDASLDSGSDHHLPLHPLDSDDLAALAHYTGPGYQELNFALREGALDVSQQARVDALQKALEKLPVYEGAVVRGTNLPADVLEQYRPGEVITEAAFTSTSTDHTVAQSSAFAGNTEFRIWSTTGRDVSSVSMYPDEKEILFPAGSKFYVVSKTVDPQTGRTIIEMIER.

The disordered stretch occupies residues 435 to 673 (ALKGLKKPPG…SGSDHHLPLH (239 aa)). Composition is skewed to pro residues over residues 443-457 (PGVP…PAAP) and 468-491 (SGKP…PLPH). Positions 560–579 (PAADTPAPSAPAASMSAASG) are enriched in low complexity. Residues 580 to 589 (PPMPPTPSLP) show a composition bias toward pro residues. Over residues 590–599 (EPASLPSGPS) the composition is skewed to low complexity. Residues 650-825 (KNANGHGPHD…GRTIIEMIER (176 aa)) enclose the TR mART core domain. Residues 656-670 (GPHDASLDSGSDHHL) show a composition bias toward basic and acidic residues. Residues 687-699 (TGPG…FALR), 730-733 (RGTN), and Glu-750 each bind NAD(+). Residue Arg-730 is part of the active site. Residues Ser-755 and Glu-795 contribute to the active site. Residue Glu-795 coordinates NAD(+).

It belongs to the Arg-specific ADP-ribosyltransferase family.

It is found in the secreted. It catalyses the reaction L-arginyl-[protein] + NAD(+) = N(omega)-(ADP-D-ribosyl)-L-arginyl-[protein] + nicotinamide + H(+). Its function is as follows. A probable mono(ADP-ribosyl)transferase, it may ADP-ribosylate Arg in target protein(s). This is Putative NAD(+)--arginine ADP-ribosyltransferase Mav from Mycobacterium avium (strain 104).